A 612-amino-acid chain; its full sequence is Glutamine--fructose-6-phosphate aminotransferase [isomerizing] (612 aa).

C2 acts as the Nucleophile; for GATase activity in catalysis. Positions 2 to 217 constitute a Glutamine amidotransferase type-2 domain; the sequence is CGIVGGVAER…EGDIARLTRD (216 aa). SIS domains are found at residues 283–428 and 461–602; these read AEAD…VKEQ and LSEL…VDQP. K607 (for Fru-6P isomerization activity) is an active-site residue.

Homodimer.

The protein resides in the cytoplasm. The catalysed reaction is D-fructose 6-phosphate + L-glutamine = D-glucosamine 6-phosphate + L-glutamate. Its function is as follows. Catalyzes the first step in hexosamine metabolism, converting fructose-6P into glucosamine-6P using glutamine as a nitrogen source. The protein is Glutamine--fructose-6-phosphate aminotransferase [isomerizing] of Acinetobacter baylyi (strain ATCC 33305 / BD413 / ADP1).